The following is a 198-amino-acid chain: Guanylate kinase (198 aa).

Residue glycine 2 is modified to N-acetylglycine. Positions 4–186 (PRPVVLSGPS…AYWALKEALS (183 aa)) constitute a Guanylate kinase-like domain. ATP is bound at residue 14–19 (GAGKST). 37–51 (SHTTRDPRPGEENGK) lines the substrate pocket. Catalysis depends on residues arginine 44, arginine 137, and arginine 148. 171-172 (ND) is a binding site for ATP.

This sequence belongs to the guanylate kinase family. Monomer. Interacts with RD3.

The protein resides in the photoreceptor inner segment. It localises to the cytoplasm. The protein localises to the cytosol. It catalyses the reaction GMP + ATP = GDP + ADP. With respect to regulation, up-regulated by RD3. Catalyzes the phosphorylation of GMP to GDP. Essential enzyme for recycling GMP and indirectly, cyclic GMP (cGMP). Involved in the cGMP metabolism in photoreceptors. This Sus scrofa (Pig) protein is Guanylate kinase (GUK1).